A 346-amino-acid chain; its full sequence is N-acetyl-gamma-glutamyl-phosphate reductase (346 aa).

Cys150 is a catalytic residue.

Belongs to the NAGSA dehydrogenase family. Type 1 subfamily.

The protein resides in the cytoplasm. It catalyses the reaction N-acetyl-L-glutamate 5-semialdehyde + phosphate + NADP(+) = N-acetyl-L-glutamyl 5-phosphate + NADPH + H(+). It functions in the pathway amino-acid biosynthesis; L-arginine biosynthesis; N(2)-acetyl-L-ornithine from L-glutamate: step 3/4. Functionally, catalyzes the NADPH-dependent reduction of N-acetyl-5-glutamyl phosphate to yield N-acetyl-L-glutamate 5-semialdehyde. This chain is N-acetyl-gamma-glutamyl-phosphate reductase, found in Acetivibrio thermocellus (strain ATCC 27405 / DSM 1237 / JCM 9322 / NBRC 103400 / NCIMB 10682 / NRRL B-4536 / VPI 7372) (Clostridium thermocellum).